We begin with the raw amino-acid sequence, 130 residues long: Ribosome-binding factor A (130 aa).

The protein belongs to the RbfA family. Monomer. Binds 30S ribosomal subunits, but not 50S ribosomal subunits or 70S ribosomes.

Its subcellular location is the cytoplasm. Functionally, one of several proteins that assist in the late maturation steps of the functional core of the 30S ribosomal subunit. Associates with free 30S ribosomal subunits (but not with 30S subunits that are part of 70S ribosomes or polysomes). Required for efficient processing of 16S rRNA. May interact with the 5'-terminal helix region of 16S rRNA. This Lachnospira eligens (strain ATCC 27750 / DSM 3376 / VPI C15-48 / C15-B4) (Eubacterium eligens) protein is Ribosome-binding factor A.